Reading from the N-terminus, the 399-residue chain is Tryptophan synthase beta chain (399 aa).

At K92 the chain carries N6-(pyridoxal phosphate)lysine.

The protein belongs to the TrpB family. Tetramer of two alpha and two beta chains. The cofactor is pyridoxal 5'-phosphate.

It catalyses the reaction (1S,2R)-1-C-(indol-3-yl)glycerol 3-phosphate + L-serine = D-glyceraldehyde 3-phosphate + L-tryptophan + H2O. It participates in amino-acid biosynthesis; L-tryptophan biosynthesis; L-tryptophan from chorismate: step 5/5. Functionally, the beta subunit is responsible for the synthesis of L-tryptophan from indole and L-serine. This chain is Tryptophan synthase beta chain, found in Legionella pneumophila (strain Paris).